Consider the following 307-residue polypeptide: Acetaldehyde dehydrogenase 2 (307 aa).

Ser-13–Ile-16 is a binding site for NAD(+). Residue Cys-132 is the Acyl-thioester intermediate of the active site. Residues Ser-163–Asn-171 and Asn-274 each bind NAD(+).

Belongs to the acetaldehyde dehydrogenase family.

The catalysed reaction is acetaldehyde + NAD(+) + CoA = acetyl-CoA + NADH + H(+). The polypeptide is Acetaldehyde dehydrogenase 2 (Methylibium petroleiphilum (strain ATCC BAA-1232 / LMG 22953 / PM1)).